The chain runs to 183 residues: Large ribosomal subunit protein eL18 (183 aa).

The segment at 146 to 183 is disordered; it reads HFGPAPGVPHSHTKPYVRSKGRKFEKARGRRKSRGFRV. Composition is skewed to basic residues over residues 156-166 and 173-183; these read SHTKPYVRSKG and RGRRKSRGFRV.

Belongs to the eukaryotic ribosomal protein eL18 family.

The chain is Large ribosomal subunit protein eL18 (RPL18) from Cicer arietinum (Chickpea).